Consider the following 191-residue polypeptide: ADP-ribosylation factor (191 aa).

Gly2 carries N-myristoyl glycine lipidation. Residues 24 to 31 (GLDAAGKT), 67 to 71 (DVGGQ), and 128 to 131 (NKQD) each bind GTP.

Belongs to the small GTPase superfamily. Arf family.

The protein resides in the golgi apparatus. GTP-binding protein involved in protein trafficking; may modulate vesicle budding and uncoating within the Golgi apparatus. The sequence is that of ADP-ribosylation factor from Giardia intestinalis (Giardia lamblia).